Consider the following 455-residue polypeptide: Bifunctional protein GlmU (455 aa).

A pyrophosphorylase region spans residues 1–226 (MSLDIVILAA…AMEVQGANDR (226 aa)). UDP-N-acetyl-alpha-D-glucosamine-binding positions include 8–11 (LAAG), Lys22, Gln73, 78–79 (GT), 99–101 (YGD), Gly136, Glu151, Asn166, and Asn224. Asp101 provides a ligand contact to Mg(2+). Asn224 provides a ligand contact to Mg(2+). Positions 227–247 (KQLSELERHYQLREARRLMAA) are linker. Residues 248–455 (GVTLRDPSRF…WKRPVKITKD (208 aa)) are N-acetyltransferase. Residues Arg330 and Lys348 each contribute to the UDP-N-acetyl-alpha-D-glucosamine site. Residue His360 is the Proton acceptor of the active site. The UDP-N-acetyl-alpha-D-glucosamine site is built by Tyr363 and Asn374. Residues Ala377, 383–384 (NY), Ser402, Ala420, and Arg437 contribute to the acetyl-CoA site.

It in the N-terminal section; belongs to the N-acetylglucosamine-1-phosphate uridyltransferase family. In the C-terminal section; belongs to the transferase hexapeptide repeat family. As to quaternary structure, homotrimer. The cofactor is Mg(2+).

Its subcellular location is the cytoplasm. It carries out the reaction alpha-D-glucosamine 1-phosphate + acetyl-CoA = N-acetyl-alpha-D-glucosamine 1-phosphate + CoA + H(+). It catalyses the reaction N-acetyl-alpha-D-glucosamine 1-phosphate + UTP + H(+) = UDP-N-acetyl-alpha-D-glucosamine + diphosphate. Its pathway is nucleotide-sugar biosynthesis; UDP-N-acetyl-alpha-D-glucosamine biosynthesis; N-acetyl-alpha-D-glucosamine 1-phosphate from alpha-D-glucosamine 6-phosphate (route II): step 2/2. It participates in nucleotide-sugar biosynthesis; UDP-N-acetyl-alpha-D-glucosamine biosynthesis; UDP-N-acetyl-alpha-D-glucosamine from N-acetyl-alpha-D-glucosamine 1-phosphate: step 1/1. It functions in the pathway bacterial outer membrane biogenesis; LPS lipid A biosynthesis. Catalyzes the last two sequential reactions in the de novo biosynthetic pathway for UDP-N-acetylglucosamine (UDP-GlcNAc). The C-terminal domain catalyzes the transfer of acetyl group from acetyl coenzyme A to glucosamine-1-phosphate (GlcN-1-P) to produce N-acetylglucosamine-1-phosphate (GlcNAc-1-P), which is converted into UDP-GlcNAc by the transfer of uridine 5-monophosphate (from uridine 5-triphosphate), a reaction catalyzed by the N-terminal domain. This chain is Bifunctional protein GlmU, found in Pseudomonas syringae pv. tomato (strain ATCC BAA-871 / DC3000).